The chain runs to 389 residues: Alanine racemase 1 (389 aa).

The Proton acceptor; specific for D-alanine role is filled by K41. An N6-(pyridoxal phosphate)lysine modification is found at K41. Residue R137 coordinates substrate. The Proton acceptor; specific for L-alanine role is filled by Y266. Residue M313 coordinates substrate.

It belongs to the alanine racemase family. Requires pyridoxal 5'-phosphate as cofactor.

The catalysed reaction is L-alanine = D-alanine. The protein operates within amino-acid biosynthesis; D-alanine biosynthesis; D-alanine from L-alanine: step 1/1. Its function is as follows. Catalyzes the interconversion of L-alanine and D-alanine. May also act on other amino acids. This Bacillus subtilis (strain 168) protein is Alanine racemase 1 (alr1).